The sequence spans 435 residues: GTPase Obg (435 aa).

The region spanning 1-159 (MAFIDKCKIV…VEVLLELKTI (159 aa)) is the Obg domain. The 170-residue stretch at 160–329 (ADIGIIGLPN…MLDDVIKIYF (170 aa)) folds into the OBG-type G domain. GTP contacts are provided by residues 166-173 (GLPNAGKS), 191-195 (FTTLN), 212-215 (DIPG), 282-285 (NKID), and 310-312 (SAL). Positions 173 and 193 each coordinate Mg(2+). The OCT domain maps to 357–435 (KSKELDKTIE…IYDITLEFEE (79 aa)).

This sequence belongs to the TRAFAC class OBG-HflX-like GTPase superfamily. OBG GTPase family. In terms of assembly, monomer. It depends on Mg(2+) as a cofactor.

The protein localises to the cytoplasm. Its function is as follows. An essential GTPase which binds GTP, GDP and possibly (p)ppGpp with moderate affinity, with high nucleotide exchange rates and a fairly low GTP hydrolysis rate. Plays a role in control of the cell cycle, stress response, ribosome biogenesis and in those bacteria that undergo differentiation, in morphogenesis control. The chain is GTPase Obg from Ureaplasma parvum serovar 3 (strain ATCC 27815 / 27 / NCTC 11736).